The following is a 341-amino-acid chain: Methionine import ATP-binding protein MetN 2 (341 aa).

The 240-residue stretch at 2-241 folds into the ABC transporter domain; it reads IELKEVVKEY…PQHTVTKRFV (240 aa). An ATP-binding site is contributed by 38–45; sequence GFSGAGKS.

It belongs to the ABC transporter superfamily. Methionine importer (TC 3.A.1.24) family. The complex is composed of two ATP-binding proteins (MetN), two transmembrane proteins (MetI) and a solute-binding protein (MetQ).

The protein resides in the cell membrane. The enzyme catalyses L-methionine(out) + ATP + H2O = L-methionine(in) + ADP + phosphate + H(+). It catalyses the reaction D-methionine(out) + ATP + H2O = D-methionine(in) + ADP + phosphate + H(+). In terms of biological role, part of the ABC transporter complex MetNIQ involved in methionine import. Responsible for energy coupling to the transport system. In Staphylococcus aureus (strain N315), this protein is Methionine import ATP-binding protein MetN 2.